Reading from the N-terminus, the 156-residue chain is Small ribosomal subunit protein uS7 (156 aa).

This sequence belongs to the universal ribosomal protein uS7 family. In terms of assembly, part of the 30S ribosomal subunit. Contacts proteins S9 and S11.

In terms of biological role, one of the primary rRNA binding proteins, it binds directly to 16S rRNA where it nucleates assembly of the head domain of the 30S subunit. Is located at the subunit interface close to the decoding center, probably blocks exit of the E-site tRNA. This chain is Small ribosomal subunit protein uS7, found in Azorhizobium caulinodans (strain ATCC 43989 / DSM 5975 / JCM 20966 / LMG 6465 / NBRC 14845 / NCIMB 13405 / ORS 571).